The chain runs to 365 residues: MEELCAALAGGVALAAPNSPAAPHPRLSAYKGRGDRLGQAERRRRLLCLQRERRLDYVNHARRLAEGDWAGVESDEDGGEDGDGEEEMEVDAGRRLPKRYANQLMLSEWLVDVPVDLEQEWIVVVCPVGKRALVVASRGSTAAYTKSGFCVNRFPSLLPGGNRHNTMNEKVYCILDCIYNEAEQTYYILDVMCWRGHPVYDCQTDFRFFWLSSKIQEEEGLGEKSRINPYKFVGLQNFPCTSESLCEVLTTNFPFEVDGLLFYHKQTHYTPGSTPLVGWLRPYMVPDILGLTVPATPLTAKPDYAGRQLQQIIESKRSKKLAAGKAQPSAEAAARNGHYELEHLSTPQPANSAQGQEEAGSQMEN.

Positions 10–72 (GGVALAAPNS…RLAEGDWAGV (63 aa)) constitute an IBB domain. Disordered regions lie at residues 15–34 (AAPNSPAAPHPRLSAYKGRG) and 69–90 (WAGVESDEDGGEDGDGEEEMEV). Residues 73–90 (ESDEDGGEDGDGEEEMEV) show a composition bias toward acidic residues. The interval 129-131 (GKR) is interaction with m3G-cap structure. A necessary for binding to the m3G-cap structure region spans residues 211–333 (LSSKIQEEEG…GKAQPSAEAA (123 aa)). Residues 317-365 (RSKKLAAGKAQPSAEAAARNGHYELEHLSTPQPANSAQGQEEAGSQMEN) are disordered. The segment covering 345–355 (STPQPANSAQG) has biased composition (polar residues).

It belongs to the snurportin family.

The protein localises to the nucleus. It is found in the cytoplasm. Functionally, functions as an U snRNP-specific nuclear import adapter. Involved in the trimethylguanosine (m3G)-cap-dependent nuclear import of U snRNPs. Binds specifically to the terminal m3G-cap U snRNAs. The polypeptide is Snurportin-1 (SNUPN) (Gallus gallus (Chicken)).